Reading from the N-terminus, the 555-residue chain is Undecaprenyl phosphate-alpha-4-amino-4-deoxy-L-arabinose arabinosyl transferase (555 aa).

The next 11 helical transmembrane spans lie at 6–26, 87–107, 116–136, 178–198, 206–226, 257–277, 293–313, 315–335, 351–371, 384–404, and 411–431; these read GSWA…PLNG, FGSV…AMLM, LATL…YSVL, FMTK…PIVI, LLIY…PWAL, APFW…LALL, ELFF…IAKG, LPTY…AYAE, VLNG…GSGL, PKIV…VVSV, and WSWA…AIPQ.

It belongs to the glycosyltransferase 83 family.

Its subcellular location is the cell inner membrane. The catalysed reaction is 4-amino-4-deoxy-alpha-L-arabinopyranosyl di-trans,octa-cis-undecaprenyl phosphate + lipid IVA = lipid IIA + di-trans,octa-cis-undecaprenyl phosphate.. Its pathway is lipopolysaccharide metabolism; 4-amino-4-deoxy-beta-L-arabinose-lipid A biosynthesis. Its function is as follows. Catalyzes the transfer of the L-Ara4N moiety of the glycolipid undecaprenyl phosphate-alpha-L-Ara4N to lipid A. The modified arabinose is attached to lipid A and is required for resistance to polymyxin and cationic antimicrobial peptides. This is Undecaprenyl phosphate-alpha-4-amino-4-deoxy-L-arabinose arabinosyl transferase from Serratia proteamaculans (strain 568).